Consider the following 248-residue polypeptide: Aquaporin TIP2-3 (248 aa).

2 helical membrane-spanning segments follow: residues 20–40 (AYVA…GSAI) and 54–74 (AGLV…VSMA). An NPA 1 motif is present at residues 83-85 (NPA). 3 helical membrane passes run 97–119 (TILT…CFLL), 141–161 (GVVM…ATAA), and 168–188 (LGTI…LAAG). The NPA 2 motif lies at 196–198 (NPA). Residues 217–237 (WVGPLVGGGLAGLVYGDVFIA) traverse the membrane as a helical segment.

It belongs to the MIP/aquaporin (TC 1.A.8) family. TIP (TC 1.A.8.10) subfamily. In terms of tissue distribution, specifically expressed in roots.

Its subcellular location is the cell membrane. Its function is as follows. Water channel required to facilitate the transport of water across cell membrane. The chain is Aquaporin TIP2-3 (TIP2-3) from Zea mays (Maize).